The following is a 315-amino-acid chain: MDMTVSNQKAESDDGSDIDDAALLQKINSLPIDQSITNSVSLEKHDFQGSDDHDSSTDLSDSTLEDVEGSEWADVSRGRYFGSDPSESIVCHNCKGNGHISKDCPHVLCTTCGAIDDHISVRCPWTKKCMNCGLLGHIAARCSEPRKRGPRVCRTCHTDTHTSSTCPLIWRYYVEKEHPVRIDVSEVRKFCYNCASDEHFGDDCTLPSRSNYPESTAFCEANCPSGNDASNKEFFETRRKEFQLERREQNRNQKSSKQRPFHKPGNSLASRLGSKPKSFKRKHSPPSEENGNLSFHSSDGRKFTKTSKKNRKRKW.

A phosphoserine mark is found at S12 and S16. Basic and acidic residues predominate over residues 43–56 (EKHDFQGSDDHDSS). A disordered region spans residues 43–68 (EKHDFQGSDDHDSSTDLSDSTLEDVE). 3 consecutive CCHC-type zinc fingers follow at residues 89–106 (IVCHNCKGNGHISKDCPH), 127–144 (KKCMNCGLLGHIAARCSE), and 189–206 (KFCYNCASDEHFGDDCTL). The interval 244–315 (LERREQNRNQ…TSKKNRKRKW (72 aa)) is disordered. Polar residues predominate over residues 287–297 (SEENGNLSFHS). Basic residues predominate over residues 303-315 (FTKTSKKNRKRKW).

Belongs to the AIR1 family. Component of the TRAMP complex composed of at least cid14, mtr4, and air1.

The protein resides in the nucleus. It is found in the nucleolus. Functionally, component of the TRAMP (TRF4) and TRAMP5 complexes which have a poly(A) RNA polymerase activity and are involved in a post-transcriptional quality control mechanism limiting inappropriate expression of genetic information. Polyadenylation is required for the degradative activity of the exosome on several of its nuclear RNA substrates like cryptic transcripts generated by RNA polymerase II and III, or hypomethylated pre-tRNAi-Met. Both complexes polyadenylate RNA processing and degradation intermediates of snRNAs, snoRNAs and mRNAs that accumulate in strains lacking a functional exosome. The protein is Protein air1 (air1) of Schizosaccharomyces pombe (strain 972 / ATCC 24843) (Fission yeast).